A 509-amino-acid polypeptide reads, in one-letter code: Bifunctional purine biosynthesis protein PurH (509 aa).

The MGS-like domain maps to 1-144 (MKRALISVSD…KNYAAVTVVV (144 aa)).

Belongs to the PurH family.

It catalyses the reaction (6R)-10-formyltetrahydrofolate + 5-amino-1-(5-phospho-beta-D-ribosyl)imidazole-4-carboxamide = 5-formamido-1-(5-phospho-D-ribosyl)imidazole-4-carboxamide + (6S)-5,6,7,8-tetrahydrofolate. It carries out the reaction IMP + H2O = 5-formamido-1-(5-phospho-D-ribosyl)imidazole-4-carboxamide. Its pathway is purine metabolism; IMP biosynthesis via de novo pathway; 5-formamido-1-(5-phospho-D-ribosyl)imidazole-4-carboxamide from 5-amino-1-(5-phospho-D-ribosyl)imidazole-4-carboxamide (10-formyl THF route): step 1/1. It functions in the pathway purine metabolism; IMP biosynthesis via de novo pathway; IMP from 5-formamido-1-(5-phospho-D-ribosyl)imidazole-4-carboxamide: step 1/1. This chain is Bifunctional purine biosynthesis protein PurH, found in Listeria innocua serovar 6a (strain ATCC BAA-680 / CLIP 11262).